A 1537-amino-acid chain; its full sequence is Adhesion G protein-coupled receptor L3 (1537 aa).

The first 19 residues, 1–19 (MWPPQLLILTMLLAPVVHG), serve as a signal peptide directing secretion. Over 20–943 (GKHNERHPAL…VKHSDAVHDL (924 aa)) the chain is Extracellular. The disordered stretch occupies residues 53-80 (PAAERSTAHRGQGPRGAARGVRGPGAPG). Positions 103-192 (SCESYPIELR…KYLEVQYECV (90 aa)) constitute an SUEL-type lectin domain. Intrachain disulfides connect cysteine 104-cysteine 134, cysteine 113-cysteine 191, cysteine 146-cysteine 178, cysteine 159-cysteine 165, and cysteine 203-cysteine 385. Residue asparagine 161 is glycosylated (N-linked (GlcNAc...) asparagine). The Olfactomedin-like domain maps to 202 to 461 (LCPGLLKGVY…VVKYSLDFGP (260 aa)). Positions 317 to 347 (YHDTSPYRWGGKSDIDLAVDENGLWVIYATE) are interaction with FLRT3. 4 residues coordinate Ca(2+): aspartate 332, asparagine 380, alanine 381, and valine 435. Residues 521-540 (RSTTASLPGRRNRSTSTPSP) are disordered. N-linked (GlcNAc...) asparagine glycans are attached at residues asparagine 532, asparagine 617, asparagine 827, asparagine 840, asparagine 885, and asparagine 911. Residues 756-935 (DIVRENTDNI…AVLMAHVEVK (180 aa)) form the GAIN-B domain. 2 disulfide bridges follow: cysteine 886–cysteine 917 and cysteine 905–cysteine 919. A GPS region spans residues 886–935 (CSFWSYSKRTMTGYWSTQGCRLLTTNKTHTTCSCNHLTNFAVLMAHVEVK). The tract at residues 923-939 (TNFAVLMAHVEVKHSDA) is stachel. The helical transmembrane segment at 944-969 (LLDVITWVGILLSLVCLLICIFTFCF) threads the bilayer. At 970 to 975 (FRGLQS) the chain is on the cytoplasmic side. Residues 976–999 (DRNTIHKNLCISLFVAELLFLIGI) form a helical membrane-spanning segment. A glycan (N-linked (GlcNAc...) asparagine) is linked at asparagine 1000. The Extracellular segment spans residues 1000 to 1006 (NRTDQPI). A helical membrane pass occupies residues 1007–1034 (ACAVFAALLHFFFLAAFTWMFLEGVQLY). Cysteine 1008 and cysteine 1080 are oxidised to a cystine. Residues 1035-1048 (IMLVEVFESEHSRR) lie on the Cytoplasmic side of the membrane. A helical membrane pass occupies residues 1049-1071 (KYFYLVGYGMPALIVAVSAAVDY). The Extracellular segment spans residues 1072–1086 (RSYGTDKVCWLRLDT). The chain crosses the membrane as a helical span at residues 1087 to 1112 (YFIWSFIGPATLIIMLNVIFLGIALY). Over 1113 to 1142 (KMFHHTAILKPESGCLDNINYEDNRPFIKS) the chain is Cytoplasmic. Residues 1143-1163 (WVIGAIALLCLLGLTWAFGLM) form a helical membrane-spanning segment. Residues 1164-1168 (YINES) are Extracellular-facing. An N-linked (GlcNAc...) asparagine glycan is attached at asparagine 1166. Residues 1169–1195 (TVIMAYLFTIFNSLQGMFIFIFHCVLQ) traverse the membrane as a helical segment. The Cytoplasmic segment spans residues 1196-1537 (KKVRKEYGKC…KGPAHLVTSL (342 aa)). A disordered region spans residues 1213–1237 (GKSTESSIGSGKTSGSRTPGRYSTG). Residues serine 1254 and serine 1522 each carry the phosphoserine modification. The disordered stretch occupies residues 1512 to 1537 (FIVPPNKDGASPEGTSKGPAHLVTSL). Residues 1532-1537 (HLVTSL) carry the PDZ-binding motif.

The protein belongs to the G-protein coupled receptor 2 family. LN-TM7 subfamily. In terms of assembly, heterodimer of 2 chains generated by proteolytic processing; the large extracellular N-terminal fragment and the membrane-bound C-terminal fragment predominantly remain associated and non-covalently linked. Interacts (via olfactomedin-like domain) with FLRT1 (via extracellular domain). Interacts (via olfactomedin-like domain) with FLRT2 (via extracellular domain). Interacts (via olfactomedin-like domain) with FLRT3 (via extracellular domain); the interaction is direct. Interacts (via extracellular domain) with TENM1. Interacts (via extracellular domain) with TENM2. Interacts (via extracellular domain) with TENM3. Identified in a complex with FLRT3 and UNC5B; does not interact with UNC5B by itself. Identified in a complex with FLRT3 and UNC5D; does not interact with UNC5D by itself. Interacts (via PDZ-binding motif) with SHANK3. Interacts (via PDZ-binding motif) with DLG4. Autoproteolytically processed at the GPS region of the GAIN-B domain; this cleavage modulates receptor activity. Post-translationally, O-glycosylated (major) and N-glycosylated. In terms of tissue distribution, localizes to postsynaptic spines in non-overlapping dendritic domains of CA1-region pyramidal neurons: specifically localizes to excitatory synapses in the S.oriens and S.radiatum, corresponding to distinct presynaptic inputs onto CA1-region pyramidal neurons.

The protein localises to the cell membrane. It localises to the postsynaptic cell membrane. The protein resides in the cell projection. Its subcellular location is the axon. It is found in the cell junction. With respect to regulation, forms a heterodimer of 2 chains generated by proteolytic processing that remain associated through non-covalent interactions mediated by the GAIN-B domain. In the inactivated receptor, the Stachel sequence (also named stalk) is embedded in the GAIN-B domain, where it adopts a beta-strand conformation. On activation, the Stachel moves into the 7 transmembrane region and adopts a twisted hook-shaped configuration that forms contacts within the receptor, leading to coupling of a G-alpha protein, which activates signaling. The cleaved GAIN-B and N-terminal domains can then dissociate from the rest of the receptor. Its function is as follows. Orphan adhesion G-protein coupled receptor (aGPCR), which mediates synapse specificity. Ligand binding causes a conformation change that triggers signaling via guanine nucleotide-binding proteins (G proteins) and modulates the activity of downstream effectors. ADGRL3 is coupled with different classes of G alpha proteins, such as G(12)/G(13), G(s), G(i) or G(q), depending on the context. Coupling to G(12)/G(13) G proteins, which mediates the activation Rho small GTPases is the most efficient. Following G-protein coupled receptor activation, associates with cell adhesion molecules that are expressed at the surface of adjacent cells to direct synapse specificity. Specifically mediates the establishment of Schaffer-collateral synapses formed by CA3-region axons on CA1-region pyramidal neurons in the hippocampus. Localizes to postsynaptic spines in excitatory synapses in the S.oriens and S.radiatum and interacts with presynaptic cell adhesion molecules FLRT3 and TENM2, promoting synapse formation. Plays a role in the development of glutamatergic synapses in the cortex. Important in determining the connectivity rates between the principal neurons in the cortex. Orphan adhesion G-protein coupled receptor (aGPCR), which mediates synapse specificity. Ligand binding causes a conformation change that triggers signaling via guanine nucleotide-binding proteins (G proteins) and modulates the activity of downstream effectors, such as adenylate cyclase. Isoform 1 is specifically coupled to G(s) G proteins and mediates activation of adenylate cyclase activity. Following G-protein coupled receptor activation, undergoes liquid-liquid phase transition, associates with (1) cell adhesion molecules that are expressed at the surface of adjacent cells, as well as (2) PDZ-containing proteins, such as SHANK3 and DLG4, in the cytoplasm to direct synapse formation. In terms of biological role, orphan adhesion G-protein coupled receptor (aGPCR). Ligand binding causes a conformation change that triggers signaling via guanine nucleotide-binding proteins (G proteins) and modulates the activity of downstream effectors, such as RhoA pathway. Isoform 7 is coupled to G(12) and/or G(13) G proteins (GNA12 and GNA13, respectively) and mediates the activation Rho small GTPases. The polypeptide is Adhesion G protein-coupled receptor L3 (Mus musculus (Mouse)).